Consider the following 160-residue polypeptide: Phosphopantetheine adenylyltransferase (160 aa).

Ser9 is a binding site for substrate. Residues 9–10 (SL) and His17 each bind ATP. Substrate-binding residues include Lys41, Leu74, and Lys88. Residues 89 to 91 (GIR), Glu99, and 123 to 129 (YLHLSST) contribute to the ATP site.

Belongs to the bacterial CoaD family. In terms of assembly, homohexamer. Mg(2+) is required as a cofactor.

It localises to the cytoplasm. It catalyses the reaction (R)-4'-phosphopantetheine + ATP + H(+) = 3'-dephospho-CoA + diphosphate. The protein operates within cofactor biosynthesis; coenzyme A biosynthesis; CoA from (R)-pantothenate: step 4/5. Functionally, reversibly transfers an adenylyl group from ATP to 4'-phosphopantetheine, yielding dephospho-CoA (dPCoA) and pyrophosphate. The chain is Phosphopantetheine adenylyltransferase from Renibacterium salmoninarum (strain ATCC 33209 / DSM 20767 / JCM 11484 / NBRC 15589 / NCIMB 2235).